A 728-amino-acid polypeptide reads, in one-letter code: Catalase-peroxidase 1 (728 aa).

Residues 91-218 (WHGAGTYRIA…LAAVQMGLIY (128 aa)) constitute a cross-link (tryptophyl-tyrosyl-methioninium (Trp-Tyr) (with M-244)). The Proton acceptor role is filled by H92. Residues 218–244 (YVNPEGPDGKPDPVAAARDIRDTFARM) constitute a cross-link (tryptophyl-tyrosyl-methioninium (Tyr-Met) (with W-91)). Residue H259 coordinates heme b.

This sequence belongs to the peroxidase family. Peroxidase/catalase subfamily. As to quaternary structure, homodimer or homotetramer. It depends on heme b as a cofactor. Post-translationally, formation of the three residue Trp-Tyr-Met cross-link is important for the catalase, but not the peroxidase activity of the enzyme.

It catalyses the reaction H2O2 + AH2 = A + 2 H2O. It carries out the reaction 2 H2O2 = O2 + 2 H2O. Its function is as follows. Bifunctional enzyme with both catalase and broad-spectrum peroxidase activity. In Burkholderia vietnamiensis (strain G4 / LMG 22486) (Burkholderia cepacia (strain R1808)), this protein is Catalase-peroxidase 1.